Reading from the N-terminus, the 534-residue chain is Phosphoenolpyruvate carboxykinase (ATP) (534 aa).

Residues R58, Y194, and K200 each coordinate substrate. Residues K200, H219, and 235-243 contribute to the ATP site; that span reads GLSGTGKTT. Residues K200 and H219 each contribute to the Mn(2+) site. D256 lines the Mn(2+) pocket. ATP-binding residues include E284, R322, and T449. A substrate-binding site is contributed by R322.

Belongs to the phosphoenolpyruvate carboxykinase (ATP) family. Mn(2+) serves as cofactor.

It is found in the cytoplasm. It carries out the reaction oxaloacetate + ATP = phosphoenolpyruvate + ADP + CO2. The protein operates within carbohydrate biosynthesis; gluconeogenesis. Functionally, involved in the gluconeogenesis. Catalyzes the conversion of oxaloacetate (OAA) to phosphoenolpyruvate (PEP) through direct phosphoryl transfer between the nucleoside triphosphate and OAA. The chain is Phosphoenolpyruvate carboxykinase (ATP) from Novosphingobium aromaticivorans (strain ATCC 700278 / DSM 12444 / CCUG 56034 / CIP 105152 / NBRC 16084 / F199).